The sequence spans 110 residues: Parvalbumin alpha (110 aa).

Position 2 is an N-acetylserine (serine 2). Residues serine 2 and serine 24 each carry the phosphoserine modification. EF-hand domains follow at residues 39 to 74 (KSAD…FSPD) and 78 to 110 (LSAK…VAES). Ca(2+) is bound by residues aspartate 52, aspartate 54, serine 56, phenylalanine 58, glutamate 60, glutamate 63, aspartate 91, aspartate 93, aspartate 95, lysine 97, and glutamate 102.

This sequence belongs to the parvalbumin family.

Functionally, in muscle, parvalbumin is thought to be involved in relaxation after contraction. It binds two calcium ions. The sequence is that of Parvalbumin alpha (PVALB) from Macaca fuscata fuscata (Japanese macaque).